The following is an 802-amino-acid chain: Leucine--tRNA ligase (802 aa).

Residues 40 to 51 (PYPSGAGLHVGH) carry the 'HIGH' region motif. The 'KMSKS' region motif lies at 576–580 (KMSKS). ATP is bound at residue K579.

Belongs to the class-I aminoacyl-tRNA synthetase family.

The protein resides in the cytoplasm. It catalyses the reaction tRNA(Leu) + L-leucine + ATP = L-leucyl-tRNA(Leu) + AMP + diphosphate. This is Leucine--tRNA ligase from Bacillus cereus (strain G9842).